Reading from the N-terminus, the 395-residue chain is NAC domain-containing protein 7 (395 aa).

One can recognise an NAC domain in the interval 7 to 156 (VPPGFRFHPT…GWVVCRVFKK (150 aa)). Residues 107-162 (IGMRKTLVFYKGRAPNGQKSDWIMHEYRLETDENGTPQEEGWVVCRVFKKRLAAVR) mediate DNA binding. Composition is skewed to polar residues over residues 344 to 362 (AATA…SNAE) and 382 to 395 (TAST…DLWK). A disordered region spans residues 344-395 (AATASASIQNNAKDTSNAEYQVDEEKDPKRASDMGEEYTASTSSSCQIDLWK).

It belongs to the plant vascular related NAC-domain protein family. As to quaternary structure, interacts with NAC083/VNI2. Expressed in root, shoot and hypocotyl vascular elements, columella root caps, epidermal and cortex root cells and root-hypocotyl junctions. Observed predominantly in root imature xylem vessels. Present in root developing xylems. Specifically expressed in vessels in the secondary xylem of the root-hypocotyl region, and in vessels but not in interfascicular fibers in stems.

Its subcellular location is the nucleus. Functionally, transcription activator that binds to the secondary wall NAC binding element (SNBE), 5'-(T/A)NN(C/T)(T/C/G)TNNNNNNNA(A/C)GN(A/C/T)(A/T)-3', in the promoter of target genes. Involved in xylem formation by promoting the expression of secondary wall-associated transcription factors and of genes involved in secondary wall biosynthesis and programmed cell death, genes driven by the secondary wall NAC binding element (SNBE). Triggers thickening of secondary walls. This chain is NAC domain-containing protein 7, found in Arabidopsis thaliana (Mouse-ear cress).